The chain runs to 491 residues: Glutamyl-tRNA(Gln) amidotransferase subunit A (491 aa).

Catalysis depends on charge relay system residues lysine 77 and serine 152. The active-site Acyl-ester intermediate is serine 176.

This sequence belongs to the amidase family. GatA subfamily. Heterotrimer of A, B and C subunits.

The catalysed reaction is L-glutamyl-tRNA(Gln) + L-glutamine + ATP + H2O = L-glutaminyl-tRNA(Gln) + L-glutamate + ADP + phosphate + H(+). Its function is as follows. Allows the formation of correctly charged Gln-tRNA(Gln) through the transamidation of misacylated Glu-tRNA(Gln) in organisms which lack glutaminyl-tRNA synthetase. The reaction takes place in the presence of glutamine and ATP through an activated gamma-phospho-Glu-tRNA(Gln). This Chlamydia trachomatis serovar A (strain ATCC VR-571B / DSM 19440 / HAR-13) protein is Glutamyl-tRNA(Gln) amidotransferase subunit A.